Here is a 58-residue protein sequence, read N- to C-terminus: ATP synthase F(0) complex subunit k, mitochondrial (58 aa).

2 positions are modified to N6-acetyllysine: Lys-16 and Lys-17. A helical membrane pass occupies residues 23–45; the sequence is TLTGRMNCVLATYGSIALIVLYF.

Component of the ATP synthase complex composed at least of ATP5F1A/subunit alpha, ATP5F1B/subunit beta, ATP5MC1/subunit c (homooctomer), MT-ATP6/subunit a, MT-ATP8/subunit 8, ATP5ME/subunit e, ATP5MF/subunit f, ATP5MG/subunit g, ATP5MK/subunit k, ATP5MJ/subunit j, ATP5F1C/subunit gamma, ATP5F1D/subunit delta, ATP5F1E/subunit epsilon, ATP5PF/subunit F6, ATP5PB/subunit b, ATP5PD/subunit d, ATP5PO/subunit OSCP. ATP synthase complex consists of a soluble F(1) head domain (subunits alpha(3) and beta(3)) - the catalytic core - and a membrane F(0) domain - the membrane proton channel (subunits c, a, 8, e, f, g, k and j). These two domains are linked by a central stalk (subunits gamma, delta, and epsilon) rotating inside the F1 region and a stationary peripheral stalk (subunits F6, b, d, and OSCP). The ATP synthase complex/complex V exists as a monomeric and a dimeric supercomplex that helps shape mitochondrial cristae to optimize proton flow.

It is found in the mitochondrion membrane. Subunit k, of the mitochondrial membrane ATP synthase complex (F(1)F(0) ATP synthase or Complex V) that produces ATP from ADP in the presence of a proton gradient across the membrane which is generated by electron transport complexes of the respiratory chain. ATP synthase complex consist of a soluble F(1) head domain - the catalytic core - and a membrane F(1) domain - the membrane proton channel. These two domains are linked by a central stalk rotating inside the F(1) region and a stationary peripheral stalk. During catalysis, ATP synthesis in the catalytic domain of F(1) is coupled via a rotary mechanism of the central stalk subunits to proton translocation. In vivo, can only synthesize ATP although its ATP hydrolase activity can be activated artificially in vitro. Part of the complex F(0) domain. Required for dimerization of the ATP synthase complex and as such regulates ATP synthesis in the mitochondria. The sequence is that of ATP synthase F(0) complex subunit k, mitochondrial from Homo sapiens (Human).